A 635-amino-acid chain; its full sequence is Sodium- and chloride-dependent creatine transporter 1 (635 aa).

The segment at 1–28 (MAKKSAENGIYSVSGDEKKGPLIAPGPD) is disordered. Over 1 to 60 (MAKKSAENGIYSVSGDEKKGPLIAPGPDGAPAKGDGPVGLGTPGGRLAVPPRETWTRQMD) the chain is Cytoplasmic. Thr42 is subject to Phosphothreonine. The chain crosses the membrane as a helical span at residues 61–81 (FIMSCVGFAVGLGNVWRFPYL). At 82–87 (CYKNGG) the chain is on the extracellular side. Residues 88-108 (GVFLIPYVLIALVGGIPIFFL) traverse the membrane as a helical segment. Residues 109–138 (EISLGQFMKAGSINVWNICPLFKGLGYASM) lie on the Cytoplasmic side of the membrane. Residues 139-159 (VIVFYCNTYYIMVLAWGFYYL) traverse the membrane as a helical segment. The Extracellular segment spans residues 160–230 (VKSFTTTLPW…LSGGLEVPGA (71 aa)). Asn192 and Asn197 each carry an N-linked (GlcNAc...) asparagine glycan. The chain crosses the membrane as a helical span at residues 231 to 251 (LNWEVTLCLLACWVLVYFCVW). Residues 252–269 (KGVKSTGKIVYFTATFPY) are Cytoplasmic-facing. A helical transmembrane segment spans residues 270–290 (VVLVVLLVRGVLLPGALDGII). Residues 291 to 304 (YYLKPDWSKLGSPQ) are Extracellular-facing. A helical membrane pass occupies residues 305–325 (VWIDAGTQIFFSYAIGLGALT). Residues 326–341 (ALGSYNRFNNNCYKDA) are Cytoplasmic-facing. The helical transmembrane segment at 342–362 (IILALINSGTSFFAGFVVFSI) threads the bilayer. Residues 363 to 394 (LGFMAAEQGVHISKVAESGPGLAFIAYPRAVT) lie on the Extracellular side of the membrane. A helical transmembrane segment spans residues 395–415 (LMPVAPLWAALFFFMLLLLGL). Residues 416–444 (DSQFVGVEGFITGLLDLLPASYYFRFQRE) are Cytoplasmic-facing. Residues 445–465 (ISVALCCALCFVIDLSMVTDG) traverse the membrane as a helical segment. Residues 466 to 479 (GMYVFQLFDYYSAS) lie on the Extracellular side of the membrane. A helical transmembrane segment spans residues 480 to 500 (GTTLLWQAFWECVVVAWVYGA). Topologically, residues 501-520 (DRFMDDIACMIGYRPCPWMK) are cytoplasmic. The helical transmembrane segment at 521–541 (WCWSFFTPLVCMGIFIFNVVY) threads the bilayer. Residues 542–560 (YEPLVYNNTYVYPWWGEAM) lie on the Extracellular side of the membrane. Asn548 carries an N-linked (GlcNAc...) asparagine glycan. The chain crosses the membrane as a helical span at residues 561 to 581 (GWAFALSSMLCVPLHLLGCLL). At 582–635 (RAKGTMAERWQHLTQPIWGLHHLEYRAQDADVRGLTTLTPVSESSKVVVVESVM) the chain is on the cytoplasmic side. Phosphothreonine occurs at positions 617 and 620. A Phosphoserine modification is found at Ser623.

It belongs to the sodium:neurotransmitter symporter (SNF) (TC 2.A.22) family. SLC6A8 subfamily. Post-translationally, glycosylated. In terms of tissue distribution, predominantly expressed in skeletal muscle and kidney. Also found in brain, heart, colon, testis and prostate.

Its subcellular location is the cell membrane. The protein resides in the apical cell membrane. The enzyme catalyses creatine(out) + chloride(out) + 2 Na(+)(out) = creatine(in) + chloride(in) + 2 Na(+)(in). Its function is as follows. Creatine:sodium symporter which mediates the uptake of creatine. Plays an important role in supplying creatine to the brain via the blood-brain barrier. The sequence is that of Sodium- and chloride-dependent creatine transporter 1 (SLC6A8) from Homo sapiens (Human).